Consider the following 173-residue polypeptide: Protein C2 (173 aa).

A zinc finger lies at 69 to 85 (CNCHFTIHHECNRGFSH).

This sequence belongs to the geminiviridae transcriptional activator protein family. Monomer. Interacting with and inactivating host adenosine kinase 2 (ADK2) in the cytoplasm. Interacts with and inhibits host SNF1 kinase.

It is found in the host cytoplasm. Acts as a suppressor of RNA-mediated gene silencing, also known as post-transcriptional gene silencing (PTGS), a mechanism of plant viral defense that limits the accumulation of viral RNAs. Suppresses the host RNA silencing by inhibiting adenosine kinase 2 (ADK2), a kinase involved in a general methylation pathway. Also suppresses the host basal defense by interacting with and inhibiting SNF1 kinase, a key regulator of cell metabolism implicated in innate antiviral defense. Determines pathogenicity. This chain is Protein C2, found in Beet curly top virus (strain California/Logan) (BCTV).